A 190-amino-acid chain; its full sequence is NADH-dependent phenylglyoxylate dehydrogenase subunit gamma (190 aa).

In terms of assembly, dimer of heteropentamers composed of an alpha (PadG), a beta (PadI), a gamma (PadE), a delta (PadF) and an epsilon (PadH) subunit.

The catalysed reaction is phenylglyoxylate + NAD(+) + CoA = benzoyl-CoA + CO2 + NADH. Its activity is regulated as follows. Activated by magnesium ions and thiamine diphosphate. Involved in the anaerobic metabolism of phenylalanine and phenylacetate. Catalyzes the oxidative decarboxylation of phenylglyoxylate to benzoyl-CoA and CO(2). It can also react slowly with 2-oxo-3-methylbutanoate and use different electron acceptors such as benzyl viologen, methyl viologen, FAD or FMN, but NAD seems to be the physiological electron acceptor. Also catalyzes an isotope exchange between CO(2) and the carboxyl group which proves partial or complete reversibility of the oxidative decarboxylation reaction. The chain is NADH-dependent phenylglyoxylate dehydrogenase subunit gamma (padE) from Aromatoleum evansii (Azoarcus evansii).